The primary structure comprises 63 residues: Cecropin-B (63 aa).

The N-terminal stretch at 1–22 (MNFNKIFVFVALILAISLGNTE) is a signal peptide. Arginine 62 carries the post-translational modification Arginine amide.

Belongs to the cecropin family.

The protein resides in the secreted. Its function is as follows. Cecropins have lytic and antibacterial activity against several Gram-positive and Gram-negative bacteria. The sequence is that of Cecropin-B (CecB) from Drosophila simulans (Fruit fly).